A 310-amino-acid chain; its full sequence is MKTLIRKFSRTAITVVLVILAFIAIFNAWVYYTESPWTRDARFSADVVAIAPDVSGLITQVNVHDNQLVKKGQVLFTIDQPRYQKALEEAQADVAYYQVLAQEKRQEAGRRNRLGVQAMSREEIDQANNVLQTVLHQLAKAQATRDLAKLDLERTVIRAPADGWVTNLNVYTGEFITRGSTAVALVKQNSFYVLAYMEETKLEGVRPGYRAEITPLGSNKVLKGTVDSVAAGVTNASSTRDDKGMATIDSNLEWVRLAQRVPVRIRLDNQQENIWPAGTTATVVVTGKQDRDESQDSFFRKMAHRLREFG.

A helical membrane pass occupies residues 12–32; the sequence is AITVVLVILAFIAIFNAWVYY.

Belongs to the membrane fusion protein (MFP) (TC 8.A.1) family.

The protein localises to the cell inner membrane. Forms an efflux pump with AaeB. This chain is p-hydroxybenzoic acid efflux pump subunit AaeA, found in Escherichia coli O127:H6 (strain E2348/69 / EPEC).